Reading from the N-terminus, the 204-residue chain is Leucyl/phenylalanyl-tRNA--protein transferase (204 aa).

Belongs to the L/F-transferase family.

The protein localises to the cytoplasm. It catalyses the reaction N-terminal L-lysyl-[protein] + L-leucyl-tRNA(Leu) = N-terminal L-leucyl-L-lysyl-[protein] + tRNA(Leu) + H(+). The enzyme catalyses N-terminal L-arginyl-[protein] + L-leucyl-tRNA(Leu) = N-terminal L-leucyl-L-arginyl-[protein] + tRNA(Leu) + H(+). It carries out the reaction L-phenylalanyl-tRNA(Phe) + an N-terminal L-alpha-aminoacyl-[protein] = an N-terminal L-phenylalanyl-L-alpha-aminoacyl-[protein] + tRNA(Phe). Functionally, functions in the N-end rule pathway of protein degradation where it conjugates Leu, Phe and, less efficiently, Met from aminoacyl-tRNAs to the N-termini of proteins containing an N-terminal arginine or lysine. In Rhizobium leguminosarum bv. trifolii (strain WSM2304), this protein is Leucyl/phenylalanyl-tRNA--protein transferase.